A 247-amino-acid polypeptide reads, in one-letter code: Cytochrome c oxidase subunit 2 (247 aa).

Residues 12–38 (DVPTPWGLYFQDSSTPNQEGIIELHDN) lie on the Mitochondrial intermembrane side of the membrane. Residues 39-59 (IMFYLVLILCTVSWLLFSIVK) form a helical membrane-spanning segment. Topologically, residues 60–78 (DSSKNPLPHKYLVHGQTIE) are mitochondrial matrix. Residues 79-101 (IIWTILPAVVLLIIAFPSFILLY) traverse the membrane as a helical segment. Topologically, residues 102-247 (LCDEVISPAM…KEFLTWLNEQ (146 aa)) are mitochondrial intermembrane. Cu cation contacts are provided by His182, Cys217, Glu219, Cys221, His225, and Met228. Position 219 (Glu219) interacts with Mg(2+).

This sequence belongs to the cytochrome c oxidase subunit 2 family. As to quaternary structure, component of the cytochrome c oxidase (complex IV, CIV), a multisubunit enzyme composed of a catalytic core of 3 subunits and several supernumerary subunits. The complex exists as a monomer or a dimer and forms supercomplexes (SCs) in the inner mitochondrial membrane with ubiquinol-cytochrome c oxidoreductase (cytochrome b-c1 complex, complex III, CIII). The cofactor is Cu cation. In terms of processing, the signal sequence of COX2 is processed by IMP1.

It localises to the mitochondrion inner membrane. It catalyses the reaction 4 Fe(II)-[cytochrome c] + O2 + 8 H(+)(in) = 4 Fe(III)-[cytochrome c] + 2 H2O + 4 H(+)(out). Functionally, component of the cytochrome c oxidase, the last enzyme in the mitochondrial electron transport chain which drives oxidative phosphorylation. The respiratory chain contains 3 multisubunit complexes succinate dehydrogenase (complex II, CII), ubiquinol-cytochrome c oxidoreductase (cytochrome b-c1 complex, complex III, CIII) and cytochrome c oxidase (complex IV, CIV), that cooperate to transfer electrons derived from NADH and succinate to molecular oxygen, creating an electrochemical gradient over the inner membrane that drives transmembrane transport and the ATP synthase. Cytochrome c oxidase is the component of the respiratory chain that catalyzes the reduction of oxygen to water. Electrons originating from reduced cytochrome c in the intermembrane space (IMS) are transferred via the dinuclear copper A center (CU(A)) of subunit 2 and heme A of subunit 1 to the active site in subunit 1, a binuclear center (BNC) formed by heme A3 and copper B (CU(B)). The BNC reduces molecular oxygen to 2 water molecules using 4 electrons from cytochrome c in the IMS and 4 protons from the mitochondrial matrix. The chain is Cytochrome c oxidase subunit 2 (COX2) from Cyberlindnera mrakii (Yeast).